The chain runs to 185 residues: Probable chorismate pyruvate-lyase (185 aa).

Residues R84, L122, and E178 each contribute to the substrate site.

Belongs to the UbiC family.

Its subcellular location is the cytoplasm. The catalysed reaction is chorismate = 4-hydroxybenzoate + pyruvate. The protein operates within cofactor biosynthesis; ubiquinone biosynthesis. Removes the pyruvyl group from chorismate, with concomitant aromatization of the ring, to provide 4-hydroxybenzoate (4HB) for the ubiquinone pathway. The protein is Probable chorismate pyruvate-lyase of Hydrogenovibrio crunogenus (strain DSM 25203 / XCL-2) (Thiomicrospira crunogena).